A 256-amino-acid polypeptide reads, in one-letter code: uncharacterized protein (256 aa).

This is an uncharacterized protein from Acanthamoeba polyphaga mimivirus (APMV).